The chain runs to 249 residues: Aliphatic sulfonates import ATP-binding protein SsuB 2 (249 aa).

The ABC transporter domain maps to 15–231 (VHVRDLARRF…DHGDPRFAQF (217 aa)). 47–54 (GRSGSGKS) serves as a coordination point for ATP.

This sequence belongs to the ABC transporter superfamily. Aliphatic sulfonates importer (TC 3.A.1.17.2) family. The complex is composed of two ATP-binding proteins (SsuB), two transmembrane proteins (SsuC) and a solute-binding protein (SsuA).

The protein resides in the cell inner membrane. The catalysed reaction is ATP + H2O + aliphatic sulfonate-[sulfonate-binding protein]Side 1 = ADP + phosphate + aliphatic sulfonateSide 2 + [sulfonate-binding protein]Side 1.. Functionally, part of the ABC transporter complex SsuABC involved in aliphatic sulfonates import. Responsible for energy coupling to the transport system. This chain is Aliphatic sulfonates import ATP-binding protein SsuB 2, found in Rhizobium johnstonii (strain DSM 114642 / LMG 32736 / 3841) (Rhizobium leguminosarum bv. viciae).